The sequence spans 387 residues: Exodeoxyribonuclease 7 large subunit (387 aa).

This sequence belongs to the XseA family. As to quaternary structure, heterooligomer composed of large and small subunits.

Its subcellular location is the cytoplasm. The enzyme catalyses Exonucleolytic cleavage in either 5'- to 3'- or 3'- to 5'-direction to yield nucleoside 5'-phosphates.. In terms of biological role, bidirectionally degrades single-stranded DNA into large acid-insoluble oligonucleotides, which are then degraded further into small acid-soluble oligonucleotides. This is Exodeoxyribonuclease 7 large subunit from Parasynechococcus marenigrum (strain WH8102).